The chain runs to 91 residues: Large ribosomal subunit protein bL31B (91 aa).

The protein belongs to the bacterial ribosomal protein bL31 family. Type B subfamily. In terms of assembly, part of the 50S ribosomal subunit.

The protein is Large ribosomal subunit protein bL31B of Neisseria meningitidis serogroup C (strain 053442).